Consider the following 199-residue polypeptide: ParB-like protein Saci_1498 (199 aa).

Belongs to the ParB family.

In terms of biological role, probably part of a 4-gene DNA damage response locus in which the upstream ups system, in combination with this downstream locus, functions in homologous recombination to rescue Sulfolobales from DNA-damaging threats. This protein might function in the DNA transfer machinery. In Sulfolobus acidocaldarius (strain ATCC 33909 / DSM 639 / JCM 8929 / NBRC 15157 / NCIMB 11770), this protein is ParB-like protein Saci_1498.